Here is a 248-residue protein sequence, read N- to C-terminus: 4-hydroxy-tetrahydrodipicolinate reductase (248 aa).

Residues 9–14, 77–79, and 104–107 contribute to the NAD(+) site; these read GARGKV, GTT, and APNF. His134 (proton donor/acceptor) is an active-site residue. His135 provides a ligand contact to (S)-2,3,4,5-tetrahydrodipicolinate. Residue Lys138 is the Proton donor of the active site. 144-145 serves as a coordination point for (S)-2,3,4,5-tetrahydrodipicolinate; the sequence is GT.

This sequence belongs to the DapB family.

Its subcellular location is the cytoplasm. It catalyses the reaction (S)-2,3,4,5-tetrahydrodipicolinate + NAD(+) + H2O = (2S,4S)-4-hydroxy-2,3,4,5-tetrahydrodipicolinate + NADH + H(+). It carries out the reaction (S)-2,3,4,5-tetrahydrodipicolinate + NADP(+) + H2O = (2S,4S)-4-hydroxy-2,3,4,5-tetrahydrodipicolinate + NADPH + H(+). It participates in amino-acid biosynthesis; L-lysine biosynthesis via DAP pathway; (S)-tetrahydrodipicolinate from L-aspartate: step 4/4. Its function is as follows. Catalyzes the conversion of 4-hydroxy-tetrahydrodipicolinate (HTPA) to tetrahydrodipicolinate. This Nocardia farcinica (strain IFM 10152) protein is 4-hydroxy-tetrahydrodipicolinate reductase.